Reading from the N-terminus, the 290-residue chain is UPF0761 membrane protein YihY (290 aa).

The next 6 helical transmembrane spans lie at 44 to 64 (LLSL…FPMF), 104 to 124 (VGAC…DSAL), 140 to 160 (FAVY…SLAI), 183 to 203 (IFPL…VPTI), 210 to 230 (AIVG…GFAL), and 244 to 264 (VLAV…IVLL).

Belongs to the UPF0761 family.

The protein resides in the cell inner membrane. This Escherichia coli O139:H28 (strain E24377A / ETEC) protein is UPF0761 membrane protein YihY.